Reading from the N-terminus, the 645-residue chain is MLKFRIRPVRHIRCYKRHAYFLRYNHTTTPAQKLQAQIEQIPLENYRNFSIVAHVDHGKSTLSDRLLEITHVIDPNARNKQVLDKLEVERERGITIKAQTCSMFYKDKRTGKNYLLHLIDTPGHVDFRGEVSRSYASCGGAILLVDASQGIQAQTVANFYLAFSLGLKLIPVINKIDLNFTDVKQVKDQIVNNFELPEEDIIGVSAKTGLNVEELLLPAIIDRIPPPTGRPDKPFRALLVDSWYDAYLGAVLLVNIVDGFVRKNDKVICAQTKEKYEVKDIGIMYPDRTSTGTLKTGQVGYLVLGMKDSKEAKIGDTIMHLSKVNETEVLPGFEEQKPMVFVGAFPADGIEFKAMDDDMSRLVLNDRSVTLERETSNALGQGWRLGFLGSLHASVFRERLEKEYGSKLIITQPTVPYLVEFTDGKKKLITNPDEFPDGATKRVNVAAFHEPFIEAVMTLPQEYLGSVIRLCDSNRGEQIDITYLNTNGQVMLKYYLPLSHLVDDFFGKLKSVSRGFASLDYEDAGYRISDVVKLQLLVNGNAIDALSRVLHKSEVERVGREWVKKFKEYVKSQLYEVVIQARANNKIIARETIKARRKDVLQKLHASDVSRRKKLLAKQKEGKKHMKTVGNIQINQEAYQAFLRR.

The 185-residue stretch at 44 to 228 folds into the tr-type G domain; that stretch reads ENYRNFSIVA…AIIDRIPPPT (185 aa). Residues 53–60, 120–124, and 174–177 contribute to the GTP site; these read AHVDHGKS, DTPGH, and NKID.

This sequence belongs to the TRAFAC class translation factor GTPase superfamily. Classic translation factor GTPase family. LepA subfamily.

It localises to the mitochondrion inner membrane. The enzyme catalyses GTP + H2O = GDP + phosphate + H(+). Its function is as follows. Promotes mitochondrial protein synthesis. May act as a fidelity factor of the translation reaction, by catalyzing a one-codon backward translocation of tRNAs on improperly translocated ribosomes. Binds to mitochondrial ribosomes in a GTP-dependent manner. The sequence is that of Translation factor GUF1, mitochondrial from Saccharomyces cerevisiae (strain RM11-1a) (Baker's yeast).